The chain runs to 257 residues: Small ribosomal subunit protein uS2 (257 aa).

The protein belongs to the universal ribosomal protein uS2 family.

This chain is Small ribosomal subunit protein uS2, found in Trichlorobacter lovleyi (strain ATCC BAA-1151 / DSM 17278 / SZ) (Geobacter lovleyi).